We begin with the raw amino-acid sequence, 224 residues long: Peroxiredoxin-6 (224 aa).

The 165-residue stretch at 5–169 (LLLGDVAPNF…ILRVVISLQL (165 aa)) folds into the Thioredoxin domain. The segment at 31 to 40 (DSWGILFSHP) is required and sufficient for targeting to lysosomes and lamellar bodies. T44 is modified (phosphothreonine). The Cysteine sulfenic acid (-SOH) intermediate; for peroxidase activity role is filled by C47. At K63 the chain carries N6-acetyllysine. Position 89 is a phosphotyrosine (Y89). D140 functions as the For phospholipase activity in the catalytic mechanism. T177 carries the phosphothreonine; by MAPK modification. At K209 the chain carries N6-acetyllysine; alternate. An N6-succinyllysine; alternate modification is found at K209.

Belongs to the peroxiredoxin family. Prx6 subfamily. In terms of assembly, homodimer. Interacts with GSTP1; mediates PRDX6 glutathionylation and regeneration. Interacts with APEX1. Interacts with STH. May interact with FAM168B. May interact with HTR2A. In terms of processing, irreversibly inactivated by overoxidation of Cys-47 to sulfinic acid (Cys-SO(2)H) and sulfonic acid (Cys-SO(3)H) forms upon oxidative stress. Post-translationally, phosphorylation at Thr-177 by MAP kinases increases the phospholipase activity of the enzyme. The phosphorylated form exhibits a greater lysophosphatidylcholine acyltransferase activity compared to the non-phosphorylated form.

The protein localises to the cytoplasm. It is found in the lysosome. The enzyme catalyses a hydroperoxide + 2 glutathione = an alcohol + glutathione disulfide + H2O. It catalyses the reaction a 1,2-diacyl-sn-glycero-3-phosphocholine + H2O = a 1-acyl-sn-glycero-3-phosphocholine + a fatty acid + H(+). The catalysed reaction is a 1-acyl-sn-glycero-3-phosphocholine + an acyl-CoA = a 1,2-diacyl-sn-glycero-3-phosphocholine + CoA. It carries out the reaction 1-hexadecanoyl-sn-glycero-3-phosphocholine + hexadecanoyl-CoA = 1,2-dihexadecanoyl-sn-glycero-3-phosphocholine + CoA. The enzyme catalyses 1,2-dihexadecanoyl-sn-glycero-3-phosphocholine + H2O = 1-hexadecanoyl-sn-glycero-3-phosphocholine + hexadecanoate + H(+). MJ33 or lithium;[(2R)-1-hexadecoxy-3-(2,2,2-trifluoroethoxy)propan-2-yl] methyl phosphate inhibits its phospholipase A2 activity. CI-976 or 2,2-Dimethyl-N-(2,4,6-trimethoxyphenyl)dodecanamide inhibits its lysophosphatidylcholine acyltransferase activity. Functionally, thiol-specific peroxidase that catalyzes the reduction of hydrogen peroxide and organic hydroperoxides to water and alcohols, respectively. Can reduce H(2)O(2) and short chain organic, fatty acid, and phospholipid hydroperoxides. Also has phospholipase activity, can therefore either reduce the oxidized sn-2 fatty acyl group of phospholipids (peroxidase activity) or hydrolyze the sn-2 ester bond of phospholipids (phospholipase activity). These activities are dependent on binding to phospholipids at acidic pH and to oxidized phospholipds at cytosolic pH. Plays a role in cell protection against oxidative stress by detoxifying peroxides and in phospholipid homeostasis. Exhibits acyl-CoA-dependent lysophospholipid acyltransferase which mediates the conversion of lysophosphatidylcholine (1-acyl-sn-glycero-3-phosphocholine or LPC) into phosphatidylcholine (1,2-diacyl-sn-glycero-3-phosphocholine or PC). Shows a clear preference for LPC as the lysophospholipid and for palmitoyl CoA as the fatty acyl substrate. The chain is Peroxiredoxin-6 (PRDX6) from Homo sapiens (Human).